Reading from the N-terminus, the 292-residue chain is Pantothenate synthetase (292 aa).

32–39 (MGFLHEGH) is a binding site for ATP. H39 acts as the Proton donor in catalysis. (R)-pantoate is bound at residue Q63. Q63 lines the beta-alanine pocket. 150–153 (GEKD) serves as a coordination point for ATP. Residue Q156 participates in (R)-pantoate binding. Residues V179 and 187–190 (MSSR) each bind ATP.

Belongs to the pantothenate synthetase family. As to quaternary structure, homodimer.

It localises to the cytoplasm. It carries out the reaction (R)-pantoate + beta-alanine + ATP = (R)-pantothenate + AMP + diphosphate + H(+). It participates in cofactor biosynthesis; (R)-pantothenate biosynthesis; (R)-pantothenate from (R)-pantoate and beta-alanine: step 1/1. In terms of biological role, catalyzes the condensation of pantoate with beta-alanine in an ATP-dependent reaction via a pantoyl-adenylate intermediate. This is Pantothenate synthetase from Myxococcus xanthus (strain DK1622).